The sequence spans 157 residues: Probable succinate transporter subunit YjjB (157 aa).

The next 4 helical transmembrane spans lie at 2-22 (GIIS…IPAV), 55-75 (AGFN…SIGI), 87-107 (IFTV…TAMI), and 129-149 (FLKA…PGLW).

Belongs to the ThrE exporter (TC 2.A.79) family. As to quaternary structure, the transporter is composed of YjjB and YjjP.

It localises to the cell inner membrane. Its function is as follows. Involved in succinate export with YjjP. Both proteins are required for export. This Klebsiella pneumoniae subsp. pneumoniae (strain ATCC 700721 / MGH 78578) protein is Probable succinate transporter subunit YjjB.